Here is a 366-residue protein sequence, read N- to C-terminus: Cobalt-precorrin-5B C(1)-methyltransferase (366 aa).

It belongs to the CbiD family.

It carries out the reaction Co-precorrin-5B + S-adenosyl-L-methionine = Co-precorrin-6A + S-adenosyl-L-homocysteine. It participates in cofactor biosynthesis; adenosylcobalamin biosynthesis; cob(II)yrinate a,c-diamide from sirohydrochlorin (anaerobic route): step 6/10. Functionally, catalyzes the methylation of C-1 in cobalt-precorrin-5B to form cobalt-precorrin-6A. The polypeptide is Cobalt-precorrin-5B C(1)-methyltransferase (Thermus thermophilus (strain ATCC BAA-163 / DSM 7039 / HB27)).